A 185-amino-acid polypeptide reads, in one-letter code: MSHIGSKQIKIPKNVSIDLSMNKIYVRGDLGKLELPLNNINIHLKNIENDQFLILDPINTGTKKQKTASYIMWGTYRTLIENMLIGVSKGYSKTIELVGVGYKAQLIDKKLVLKIGFSIEINYEIPSDIKVDCSRSNIIVISGIDKQKVNQVAAEIRLLRKPEPYKGKGIRYLGEVIRLKEGKKK.

It belongs to the universal ribosomal protein uL6 family.

The protein localises to the mitochondrion. In Reclinomonas americana, this protein is Large ribosomal subunit protein uL6m (RPL6).